The primary structure comprises 525 residues: Mitoguardin (525 aa).

Residues 26–45 traverse the membrane as a helical segment; it reads VVLFSLTAGVALMSVLSRFL. Basic residues predominate over residues 47 to 67; that stretch reads RRKPPRPPRRARKYTGRRNRN. 2 disordered regions span residues 47 to 73 and 210 to 239; these read RRKPPRPPRRARKYTGRRNRNSMRSPN and DEAEEEAGEADDDRRSRKSGSVLSRAGSDP. Residues 211–220 are compositionally biased toward acidic residues; sequence EAEEEAGEAD.

The protein belongs to the mitoguardin family. As to quaternary structure, interacts with zuc.

Its subcellular location is the mitochondrion outer membrane. Functionally, regulator of mitochondrial fusion required to maintain neuronal homeostasis. The chain is Mitoguardin from Drosophila melanogaster (Fruit fly).